The sequence spans 1553 residues: Sterol 3-beta-glucosyltransferase (1553 aa).

2 stretches are compositionally biased toward polar residues: residues 1-10 and 25-36; these read MASSQPTSSG and LNTETSSSQHRA. Disordered regions lie at residues 1 to 106 and 189 to 270; these read MASS…NEED and PASA…GLAP. Residues 90–100 show a composition bias toward basic and acidic residues; it reads LPDRLKDNGKE. Over residues 211–222 the composition is skewed to low complexity; that stretch reads LLQSVPSLSRLS. Positions 223–232 are enriched in basic residues; sequence SSHKSKKTKQ. GRAM domains lie at 323-370 and 464-495; these read KKLK…HLPK and SLQR…EEAQ. Residues 374 to 470 form the PH domain; that stretch reads EIAKSGYLSK…WVKSLQRVIF (97 aa). Disordered regions lie at residues 542-569, 611-662, and 805-825; these read SPED…GSPR, FSRR…FDDP, and GKKH…VEDD. Positions 633–650 are enriched in basic and acidic residues; the sequence is LHGDGRRSFSKPRHEPHA. The segment covering 651–662 has biased composition (polar residues); the sequence is STDSYAQSFDDP. The span at 810 to 819 shows a compositional bias: basic and acidic residues; sequence DHPAGRRTER. Residues 834–900 enclose the GRAM 3 domain; it reads ARFQAHFALP…KDIETVDKEK (67 aa). Residues serine 1020, arginine 1021, aspartate 1023, alanine 1328, histidine 1330, histidine 1343, serine 1346, glycine 1347, threonine 1348, aspartate 1367, and glutamine 1368 each coordinate UDP-alpha-D-glucose. Disordered stretches follow at residues 1446 to 1504 and 1527 to 1553; these read KHQS…GSMS and PALG…VKYV. Positions 1466-1488 are enriched in acidic residues; that stretch reads PEDDQGQAAEEDDIDADDEEEES.

Belongs to the glycosyltransferase 28 family.

The protein localises to the cytoplasm. The protein resides in the preautophagosomal structure membrane. It carries out the reaction a sterol + UDP-alpha-D-glucose = a sterol 3-beta-D-glucoside + UDP + H(+). The enzyme catalyses ergosterol + UDP-alpha-D-glucose = ergosteryl 3-beta-D-glucoside + UDP + H(+). Functionally, sterol glycosyltransferase responsible for the glycosylation of ergosterol to form ergosterol-glucoside. This chain is Sterol 3-beta-glucosyltransferase (apg-12), found in Neurospora crassa (strain ATCC 24698 / 74-OR23-1A / CBS 708.71 / DSM 1257 / FGSC 987).